The following is a 194-amino-acid chain: ECF RNA polymerase sigma factor SigX (194 aa).

The short motif at 32-45 (DLLQEVYIRVLNSY) is the Polymerase core binding element. Residues 136–155 (IQETAKALRFSESKVKTTQH) constitute a DNA-binding region (H-T-H motif).

The protein belongs to the sigma-70 factor family. ECF subfamily. As to quaternary structure, interacts transiently with the RNAP core.

It is found in the cell membrane. In terms of biological role, sigma factors are initiation factors that promote the attachment of RNA polymerase (RNAP) to specific initiation sites and are then released. May be involved in the regulation of iron metabolism. Associates with RNAP core during early growth phases, association decreases as cells age. This chain is ECF RNA polymerase sigma factor SigX (sigX), found in Bacillus subtilis (strain 168).